Reading from the N-terminus, the 60-residue chain is Metallothionein (60 aa).

Residues 1–28 are beta; that stretch reads MDPCDCSKTGKCNCGGSCTCTNCSCTSC. The a divalent metal cation site is built by cysteine 4, cysteine 6, cysteine 12, cysteine 14, cysteine 18, cysteine 20, cysteine 23, cysteine 25, cysteine 28, cysteine 32, cysteine 33, cysteine 35, cysteine 36, cysteine 40, cysteine 43, cysteine 47, cysteine 49, cysteine 54, cysteine 58, and cysteine 59. The tract at residues 29 to 60 is alpha; that stretch reads KKSCCACCPSGCTKCASGCVCKGKTCDTTCCQ.

The protein belongs to the metallothionein superfamily. Type 1 family.

In terms of biological role, metallothioneins have a high content of cysteine residues that bind various heavy metals. The chain is Metallothionein (mt) from Oryzias latipes (Japanese rice fish).